The primary structure comprises 320 residues: Thiamine thiazole synthase (320 aa).

Substrate is bound by residues Cys-82, 103–104 (EA), Gly-111, and Val-176. Position 209 is a 2,3-didehydroalanine (Cys) (Cys-209). Residues Asp-211, His-226, Met-278, and 288–290 (RMG) each bind substrate.

Belongs to the THI4 family. Homooctamer. It depends on Fe cation as a cofactor. In terms of processing, during the catalytic reaction, a sulfide is transferred from Cys-209 to a reaction intermediate, generating a dehydroalanine residue.

Its subcellular location is the cytoplasm. The protein resides in the nucleus. The enzyme catalyses [ADP-thiazole synthase]-L-cysteine + glycine + NAD(+) = [ADP-thiazole synthase]-dehydroalanine + ADP-5-ethyl-4-methylthiazole-2-carboxylate + nicotinamide + 3 H2O + 2 H(+). In terms of biological role, involved in biosynthesis of the thiamine precursor thiazole. Catalyzes the conversion of NAD and glycine to adenosine diphosphate 5-(2-hydroxyethyl)-4-methylthiazole-2-carboxylic acid (ADT), an adenylated thiazole intermediate. The reaction includes an iron-dependent sulfide transfer from a conserved cysteine residue of the protein to a thiazole intermediate. The enzyme can only undergo a single turnover, which suggests it is a suicide enzyme. May have additional roles in adaptation to various stress conditions and in DNA damage tolerance. This chain is Thiamine thiazole synthase (sti35), found in Fusarium oxysporum f. sp. lycopersici (strain 4287 / CBS 123668 / FGSC 9935 / NRRL 34936) (Fusarium vascular wilt of tomato).